The primary structure comprises 545 residues: Chaperonin GroEL 2 (545 aa).

ATP is bound by residues 30-33 (TLGP), K51, 87-91 (DGTTT), G415, and D496.

It belongs to the chaperonin (HSP60) family. Forms a cylinder of 14 subunits composed of two heptameric rings stacked back-to-back. Interacts with the co-chaperonin GroES.

Its subcellular location is the cytoplasm. The enzyme catalyses ATP + H2O + a folded polypeptide = ADP + phosphate + an unfolded polypeptide.. Its function is as follows. Together with its co-chaperonin GroES, plays an essential role in assisting protein folding. The GroEL-GroES system forms a nano-cage that allows encapsulation of the non-native substrate proteins and provides a physical environment optimized to promote and accelerate protein folding. The chain is Chaperonin GroEL 2 from Nitrobacter winogradskyi (strain ATCC 25391 / DSM 10237 / CIP 104748 / NCIMB 11846 / Nb-255).